A 414-amino-acid polypeptide reads, in one-letter code: tRNA dimethylallyltransferase (414 aa).

Position 33–40 (33–40 (APTASGKT)) interacts with ATP. 35 to 40 (TASGKT) is a substrate binding site. Interaction with substrate tRNA regions lie at residues 58 to 61 (DSAL), 182 to 186 (QRITR), and 266 to 271 (RCVGYR).

Belongs to the IPP transferase family. As to quaternary structure, monomer. Mg(2+) is required as a cofactor.

It carries out the reaction adenosine(37) in tRNA + dimethylallyl diphosphate = N(6)-dimethylallyladenosine(37) in tRNA + diphosphate. In terms of biological role, catalyzes the transfer of a dimethylallyl group onto the adenine at position 37 in tRNAs that read codons beginning with uridine, leading to the formation of N6-(dimethylallyl)adenosine (i(6)A). The sequence is that of tRNA dimethylallyltransferase from Psychrobacter cryohalolentis (strain ATCC BAA-1226 / DSM 17306 / VKM B-2378 / K5).